Here is a 372-residue protein sequence, read N- to C-terminus: tRNA-specific 2-thiouridylase MnmA (372 aa).

ATP contacts are provided by residues 7–14 (GLSGGVDS) and methionine 33. An interaction with target base in tRNA region spans residues 104–106 (NPD). Residue cysteine 109 is the Nucleophile of the active site. A disulfide bond links cysteine 109 and cysteine 202. Residue glycine 134 participates in ATP binding. An interaction with tRNA region spans residues 152–154 (KDQ). Residue cysteine 202 is the Cysteine persulfide intermediate of the active site. The tract at residues 310–311 (RY) is interaction with tRNA.

It belongs to the MnmA/TRMU family.

Its subcellular location is the cytoplasm. The enzyme catalyses S-sulfanyl-L-cysteinyl-[protein] + uridine(34) in tRNA + AH2 + ATP = 2-thiouridine(34) in tRNA + L-cysteinyl-[protein] + A + AMP + diphosphate + H(+). In terms of biological role, catalyzes the 2-thiolation of uridine at the wobble position (U34) of tRNA, leading to the formation of s(2)U34. The chain is tRNA-specific 2-thiouridylase MnmA from Mesomycoplasma hyopneumoniae (strain 7448) (Mycoplasma hyopneumoniae).